The chain runs to 299 residues: HTH-type transcriptional regulator CynR (299 aa).

One can recognise an HTH lysR-type domain in the interval Met-1 to Thr-58. A DNA-binding region (H-T-H motif) is located at residues Phe-18–Arg-37.

It belongs to the LysR transcriptional regulatory family.

The protein resides in the cytoplasm. Functionally, positively regulates the cynTSX operon, and negatively regulates its own transcription. Binds specifically to the cynR-cynTSX intergenic region. In Escherichia coli (strain K12), this protein is HTH-type transcriptional regulator CynR (cynR).